A 457-amino-acid polypeptide reads, in one-letter code: Putative transposase y4bF (457 aa).

An Integrase catalytic domain is found at 128–313 (TFHQPRLRRE…RPLNLAPDRL (186 aa)). Residues 406-440 (QDERPAPKVRTNSEKNGYTPRGRKPGKRTDFMNDP) are disordered.

This is Putative transposase y4bF from Sinorhizobium fredii (strain NBRC 101917 / NGR234).